A 210-amino-acid chain; its full sequence is NADH dehydrogenase [ubiquinone] iron-sulfur protein 8, mitochondrial (210 aa).

A mitochondrion-targeting transit peptide spans 1 to 34; sequence MRCLTTPMLLRALAQAARAGPPGGRSLHSSAVAA. 2 consecutive 4Fe-4S ferredoxin-type domains span residues 102–131 and 141–170; these read RRYP…IEAE and TRYD…EGPN. Positions 111, 114, 117, 121, 150, 153, 156, and 160 each coordinate [4Fe-4S] cluster.

This sequence belongs to the complex I 23 kDa subunit family. As to quaternary structure, core subunit of respiratory chain NADH dehydrogenase (Complex I) which is composed of 45 different subunits. This is a component of the iron-sulfur (IP) fragment of the enzyme. Interacts with RAB5IF. Requires [4Fe-4S] cluster as cofactor. Expressed in all tissues with the highest level in heart and skeletal muscle and the lowest level in lung.

It is found in the mitochondrion inner membrane. The enzyme catalyses a ubiquinone + NADH + 5 H(+)(in) = a ubiquinol + NAD(+) + 4 H(+)(out). In terms of biological role, core subunit of the mitochondrial membrane respiratory chain NADH dehydrogenase (Complex I) which catalyzes electron transfer from NADH through the respiratory chain, using ubiquinone as an electron acceptor. Essential for the catalytic activity and assembly of complex I. In Homo sapiens (Human), this protein is NADH dehydrogenase [ubiquinone] iron-sulfur protein 8, mitochondrial (NDUFS8).